Consider the following 437-residue polypeptide: Adenosylhomocysteinase (437 aa).

Thr58, Asp133, and Glu158 together coordinate substrate. 159-161 (TTT) contributes to the NAD(+) binding site. 2 residues coordinate substrate: Lys188 and Asp192. Residues Asn193, 224–229 (GDVGKG), Glu245, 301–303 (VGH), and Asn348 contribute to the NAD(+) site.

This sequence belongs to the adenosylhomocysteinase family. As to quaternary structure, homotetramer. The cofactor is NAD(+).

It carries out the reaction S-adenosyl-L-homocysteine + H2O = L-homocysteine + adenosine. The protein operates within amino-acid biosynthesis; L-homocysteine biosynthesis; L-homocysteine from S-adenosyl-L-homocysteine: step 1/1. Adenosylhomocysteine is a competitive inhibitor of S-adenosyl-L-methionine-dependent methyl transferase reactions; therefore adenosylhomocysteinase may play a key role in the control of methylations via regulation of the intracellular concentration of adenosylhomocysteine. In Caenorhabditis elegans, this protein is Adenosylhomocysteinase (ahcy-1).